The primary structure comprises 847 residues: Leucine--tRNA ligase (847 aa).

The short motif at 43–53 (PYPSGKLHMGH) is the 'HIGH' region element. The 'KMSKS' region motif lies at 607–611 (KMSKS). Lys-610 is an ATP binding site.

Belongs to the class-I aminoacyl-tRNA synthetase family.

The protein localises to the cytoplasm. The enzyme catalyses tRNA(Leu) + L-leucine + ATP = L-leucyl-tRNA(Leu) + AMP + diphosphate. In Buchnera aphidicola subsp. Cinara cedri (strain Cc), this protein is Leucine--tRNA ligase.